The sequence spans 404 residues: Argininosuccinate synthase (404 aa).

ATP is bound by residues Ala9 to Ser17 and Ala36. Tyr87 serves as a coordination point for L-citrulline. Gly117 contacts ATP. L-aspartate contacts are provided by Thr119, Asn123, and Asp124. L-citrulline is bound at residue Asn123. Positions 127, 176, and 261 each coordinate L-citrulline.

The protein belongs to the argininosuccinate synthase family. Type 1 subfamily. In terms of assembly, homotetramer.

The protein resides in the cytoplasm. The enzyme catalyses L-citrulline + L-aspartate + ATP = 2-(N(omega)-L-arginino)succinate + AMP + diphosphate + H(+). Its pathway is amino-acid biosynthesis; L-arginine biosynthesis; L-arginine from L-ornithine and carbamoyl phosphate: step 2/3. This chain is Argininosuccinate synthase, found in Burkholderia pseudomallei (strain K96243).